The chain runs to 83 residues: U5-theraphotoxin-Hs1d (83 aa).

The N-terminal stretch at 1–21 (MKTSMFLTLTGLVLLFVVCYA) is a signal peptide. Residues 22-49 (SESEEKEFPKELLSSIFAADSDFKVEER) constitute a propeptide that is removed on maturation. 3 disulfides stabilise this stretch: Cys-51-Cys-63, Cys-56-Cys-68, and Cys-62-Cys-75.

Belongs to the neurotoxin 10 (Hwtx-1) family. 51 (Hntx-8) subfamily. Hntx-8 sub-subfamily. In terms of tissue distribution, expressed by the venom gland.

The protein localises to the secreted. Its function is as follows. Agglutinates erythrocytes. In Cyriopagopus schmidti (Chinese bird spider), this protein is U5-theraphotoxin-Hs1d.